A 592-amino-acid polypeptide reads, in one-letter code: Glycosyltransferase 25 family member (592 aa).

A signal peptide spans 1–13; sequence MLALLLTTTIVSG. Asparagine 249 and asparagine 510 each carry an N-linked (GlcNAc...) asparagine glycan. Composition is skewed to basic and acidic residues over residues 552–563 and 579–592; these read RIQEPKKGDKEQ and GEHD…RSEL. The segment at 552-592 is disordered; the sequence is RIQEPKKGDKEQLPNAPALLSESGIGQGEHDLETKNRRSEL. Positions 589–592 match the Prevents secretion from ER motif; sequence RSEL.

The protein belongs to the glycosyltransferase 25 family.

It is found in the endoplasmic reticulum lumen. This Anopheles gambiae (African malaria mosquito) protein is Glycosyltransferase 25 family member.